Here is a 382-residue protein sequence, read N- to C-terminus: Alkaline serine protease ver112 (382 aa).

A signal peptide spans 1–15; the sequence is MRLSIIAAVLPLALA. Positions 16–102 are excised as a propeptide; it reads APVAEPEIAP…IEQDAIFSIN (87 aa). An Inhibitor I9 domain is found at 56–99; it reads SKIPGIERVYENVLNGFSATLSNEELERLRRDPDVESIEQDAIF. The 272-residue stretch at 111 to 382 folds into the Peptidase S8 domain; it reads TWGLTRISHR…VNYLAFNGAT (272 aa). 2 disulfides stabilise this stretch: cysteine 138–cysteine 227 and cysteine 282–cysteine 353. Active-site charge relay system residues include aspartate 143, histidine 173, and serine 328.

This sequence belongs to the peptidase S8 family.

Its subcellular location is the secreted. With respect to regulation, inhibited by phenylmethylsulfonyl fluoride (PMSF). Functionally, serine protease which can degrade the nematode cuticle. The protein is Alkaline serine protease ver112 of Corniculantispora psalliotae (Lecanicillium psalliotae).